The following is a 285-amino-acid chain: Golgi to ER traffic protein 2 (285 aa).

Residues 1–10 (MSELTEAEKR) show a composition bias toward basic and acidic residues. The segment at 1–71 (MSELTEAEKR…HSATPDIKED (71 aa)) is disordered. Residue S2 is modified to N-acetylserine. The Cytoplasmic segment spans residues 2–148 (SELTEAEKRR…LDYHDYLLNR (147 aa)). Over residues 11 to 20 (RLLRERRQKK) the composition is skewed to basic residues. Residues 24–42 (GGASSRLNKITGQASSHLN) show a composition bias toward polar residues. S45 bears the Phosphoserine mark. Over residues 49-60 (APSAAKATPPAS) the composition is skewed to low complexity. Residues 149 to 169 (LKAWTILVKWVFFLLPYLYLI) traverse the membrane as a helical segment. Topologically, residues 170-196 (TRPNSSVWPAYAFTQSAWFAPLRNPSN) are lumenal. N173 and N196 each carry an N-linked (GlcNAc...) asparagine glycan. A helical membrane pass occupies residues 197–216 (FTRIFATFEFLSISIYYQLL). Residues 217 to 263 (KNVEHKSKIKNLQDTNKLVKLVSLVPEGVIPVANLKGKLITLLQYWD) lie on the Cytoplasmic side of the membrane. A helical membrane pass occupies residues 264–284 (LLSMLITDISFVLIVLGLLTY). A topological domain (lumenal) is located at residue L285.

The protein belongs to the GET2 family. As to quaternary structure, component of the Golgi to ER traffic (GET) complex, which is composed of GET1, GET2 and GET3. Within the complex, GET1 and GET2 form a heterotetramer which is stabilized by phosphatidylinositol binding and which binds to the GET3 homodimer.

Its subcellular location is the endoplasmic reticulum membrane. It localises to the golgi apparatus membrane. In terms of biological role, required for the post-translational delivery of tail-anchored (TA) proteins to the endoplasmic reticulum. Together with GET1, acts as a membrane receptor for soluble GET3, which recognizes and selectively binds the transmembrane domain of TA proteins in the cytosol. The GET complex cooperates with the HDEL receptor ERD2 to mediate the ATP-dependent retrieval of resident ER proteins that contain a C-terminal H-D-E-L retention signal from the Golgi to the ER. Involved in DNA replication and DNA damage response and also in cell wall function. The sequence is that of Golgi to ER traffic protein 2 from Saccharomyces cerevisiae (strain YJM789) (Baker's yeast).